A 913-amino-acid polypeptide reads, in one-letter code: MSGAPPPSSGFAPRSYGQQPLSHAPRSSMMSVEYDGIPLPPPSIRSCGSQQYVTSYIPTGAAFPPSSVQDMISSMKSYASATDLVRTYSEIPSVEEALSTLDRAAAALNARRYRDALKLYLEGGYAMANVAERQANPKICNLLTSKGFETLNWCARLCDWIEGRIKEKHPRPGVHKVGIPVSNWDEDWVGPFMDEEEARRMWYTPVYCPHPIDFSNLGYRLRCVETGRRPRLMICITMYNEGPQQLKATLKKLANNLAYLKEQMPGDEKSLTGAFAGDDVWQNVLVCIVADGREQVHPKTLDYLEAIGLYDEDLLTINSAGIGAQCHLFEHTLQLSVNGKCLLPIQTVFALKENKASKLDSHHWYFNAFAEQIQPEYTAVMDVGTMLTKSALYHLLFAFERNHQIGGACGQLTVDNPFENLSNWVISAQHFEYKISNILDKSLESCFGFISVLPGAFSAYRYEAIRGAPLDAYFQTLNIELDVLGPFIGNMYLAEDRILSFEVVARKNCNWTMHYVKDAVARTDVPHDLVGLISQRKRWLNGAFFATLFSIWNWGRIYSESKHTFVRKMAFLVFYVYHLLYTAFGFFLPANLYLALFFIVFQGFQQNRLEFIDTSEYSQTVLDCAVYIYNFSYLFGLLMLIIIGLGNNPKHMKLTYYFVGAVFGLMMMLSSLVGAGIFFSTPATVHSIVVSILTVGVYFIASALHGEVHHIFMTFTHYTALIPSFVNIFTIYSFCNLQDLSWGTKGLHDDPLLAASLDETEKGDFKDVIAKRRALEELRREEKERVENRKKNFEAFRTNVLLTWAFSNLIFALFVVYFASSSTYMPVLYIFVASLNTCRLLGSIGHWVYIHTEGLRGRVIDKSECGNGTGRYPQNSYVQLEEHYAALAEDQRTYASGRTNASVRTVNDVSSAA.

A disordered region spans residues 1 to 27; the sequence is MSGAPPPSSGFAPRSYGQQPLSHAPRS. UDP-N-acetyl-alpha-D-glucosamine-binding residues include Thr237, Glu241, and Asp291. Asn420 is a glycosylation site (N-linked (GlcNAc...) asparagine). Asp496 is a catalytic residue. A glycan (N-linked (GlcNAc...) asparagine) is linked at Asn510. The next 6 membrane-spanning stretches (helical) occupy residues 539-559, 581-601, 625-645, 658-678, 684-704, and 711-731; these read WLNG…RIYS, YTAF…FIVF, AVYI…IIGL, FVGA…AGIF, TVHS…ASAL, and IFMT…IFTI. A Conserved SWG motif motif is present at residues 741–743; that stretch reads SWG. 2 helical membrane passes run 800-820 and 825-845; these read VLLT…YFAS and MPVL…GSIG. Residues Asn867 and Asn900 are each glycosylated (N-linked (GlcNAc...) asparagine).

Belongs to the chitin synthase family. Class II subfamily. Homodimer. Requires Mn(2+) as cofactor.

It localises to the cell membrane. The enzyme catalyses [(1-&gt;4)-N-acetyl-beta-D-glucosaminyl](n) + UDP-N-acetyl-alpha-D-glucosamine = [(1-&gt;4)-N-acetyl-beta-D-glucosaminyl](n+1) + UDP + H(+). With respect to regulation, the activity is inhibited by nikkomycin Z (NikZ). Its function is as follows. Polymerizes chitin, a structural polymer of the cell wall and septum, by transferring the sugar moiety of UDP-GlcNAc to the non-reducing end of the growing chitin polymer. Involved in mycelial growth, sporangial production, zoospore release and pathogenesis. The protein is Chitin synthase 1 of Phytophthora sojae (strain P6497) (Soybean stem and root rot agent).